Here is a 76-residue protein sequence, read N- to C-terminus: Small ribosomal subunit protein bS18 (76 aa).

The protein belongs to the bacterial ribosomal protein bS18 family. Part of the 30S ribosomal subunit. Forms a tight heterodimer with protein bS6.

Its function is as follows. Binds as a heterodimer with protein bS6 to the central domain of the 16S rRNA, where it helps stabilize the platform of the 30S subunit. The chain is Small ribosomal subunit protein bS18 from Oceanobacillus iheyensis (strain DSM 14371 / CIP 107618 / JCM 11309 / KCTC 3954 / HTE831).